Here is a 732-residue protein sequence, read N- to C-terminus: X-ray repair cross-complementing protein 5 (732 aa).

Residues 9–161 form the VWFA domain; the sequence is AVVLCVDVGV…CNLKKSGISL (153 aa). Residues 138 to 165 form a leucine-zipper region; it reads LSSPFSQDQLDVIICNLKKSGISLQFFL. Lys195 participates in a covalent cross-link: Glycyl lysine isopeptide (Lys-Gly) (interchain with G-Cter in SUMO2). The region spanning 253–453 is the Ku domain; sequence IGPNLSIKIV…CTPTEAQLSA (201 aa). Phosphoserine is present on Ser258. Lys265 bears the N6-acetyllysine mark. A Phosphoserine modification is found at Ser318. The residue at position 332 (Lys332) is an N6-acetyllysine. Glycyl lysine isopeptide (Lys-Gly) (interchain with G-Cter in SUMO2) cross-links involve residues Lys532 and Lys534. The residue at position 535 (Thr535) is a Phosphothreonine. Glycyl lysine isopeptide (Lys-Gly) (interchain with G-Cter in SUMO2) cross-links involve residues Lys567 and Lys569. 3 positions are modified to phosphoserine; by PRKDC: Ser578, Ser580, and Ser581. An N6-acetyllysine modification is found at Lys666. Glycyl lysine isopeptide (Lys-Gly) (interchain with G-Cter in SUMO2) cross-links involve residues Lys670 and Lys689. Residues 708 to 732 form a disordered region; sequence PKDKAKEDTTGPEEAGDVDDLLDMI. Thr716 carries the post-translational modification Phosphothreonine; by PRKDC. The segment covering 717-732 has biased composition (acidic residues); the sequence is TGPEEAGDVDDLLDMI. An EEXXXDL motif motif is present at residues 720–728; it reads EEAGDVDDL.

Belongs to the ku80 family. As to quaternary structure, heterodimer composed of XRCC5/Ku80 and XRCC6/Ku70. Component of the core long-range non-homologous end joining (NHEJ) complex (also named DNA-PK complex) composed of PRKDC, LIG4, XRCC4, XRCC6/Ku70, XRCC5/Ku86 and NHEJ1/XLF. Additional component of the NHEJ complex includes PAXX. Following autophosphorylation, PRKDC dissociates from DNA, leading to formation of the short-range NHEJ complex, composed of LIG4, XRCC4, XRCC6/Ku70, XRCC5/Ku86 and NHEJ1/XLF. The XRCC5-XRCC6 dimer also associates with NAA15, and this complex displays DNA binding activity towards the osteocalcin FGF response element (OCFRE). In addition, XRCC5 binds to the osteoblast-specific transcription factors MSX2 and RUNX2. Interacts with ELF3. Interacts with APLF (via KBM motif). The XRCC5/XRCC6 dimer associates in a DNA-dependent manner with APEX1. Identified in a complex with DEAF1 and XRCC6. Interacts with NR4A3; the DNA-dependent protein kinase complex DNA-PK phosphorylates and activates NR4A3 and prevents NR4A3 ubiquitinylation and degradation. Interacts with RNF138. Interacts with CYREN (via KBM motif). Interacts with WRN (via KBM motif). Interacts (via N-terminus) with HSF1 (via N-terminus); this interaction is direct and prevents XRCC5/XRCC6 heterodimeric binding and non-homologous end joining (NHEJ) repair activities induced by ionizing radiation (IR). Interacts with DHX9; this interaction occurs in a RNA-dependent manner. Part of the HDP-RNP complex composed of at least HEXIM1, PRKDC, XRCC5, XRCC6, paraspeckle proteins (SFPQ, NONO, PSPC1, RBM14, and MATR3) and NEAT1 RNA. Interacts with ERCC6. Interacts with ATF7. The XRCC5-XRCC6 dimer associates with ALKBH2. Interacts with TPRN; TPRN interacts with a number of DNA damage response proteins, is recruited to sites of DNA damage and may play a role in DNA damage repair. Interacts with ERCC6L2. In terms of processing, ADP-ribosylated by PARP3. Post-translationally, phosphorylated on serine residues. Phosphorylation by PRKDC may enhance helicase activity. Sumoylated. In terms of processing, ubiquitinated by RNF8 via 'Lys-48'-linked ubiquitination following DNA damage, leading to its degradation and removal from DNA damage sites. Ubiquitinated by RNF138, leading to remove the Ku complex from DNA breaks.

It is found in the nucleus. The protein localises to the nucleolus. The protein resides in the chromosome. Functionally, single-stranded DNA-dependent ATP-dependent helicase that plays a key role in DNA non-homologous end joining (NHEJ) by recruiting DNA-PK to DNA. Required for double-strand break repair and V(D)J recombination. Also has a role in chromosome translocation. The DNA helicase II complex binds preferentially to fork-like ends of double-stranded DNA in a cell cycle-dependent manner. It works in the 3'-5' direction. During NHEJ, the XRCC5-XRRC6 dimer performs the recognition step: it recognizes and binds to the broken ends of the DNA and protects them from further resection. Binding to DNA may be mediated by XRCC6. The XRCC5-XRRC6 dimer acts as a regulatory subunit of the DNA-dependent protein kinase complex DNA-PK by increasing the affinity of the catalytic subunit PRKDC to DNA by 100-fold. The XRCC5-XRRC6 dimer is probably involved in stabilizing broken DNA ends and bringing them together. The assembly of the DNA-PK complex to DNA ends is required for the NHEJ ligation step. The XRCC5-XRRC6 dimer probably also acts as a 5'-deoxyribose-5-phosphate lyase (5'-dRP lyase), by catalyzing the beta-elimination of the 5' deoxyribose-5-phosphate at an abasic site near double-strand breaks. XRCC5 probably acts as the catalytic subunit of 5'-dRP activity, and allows to 'clean' the termini of abasic sites, a class of nucleotide damage commonly associated with strand breaks, before such broken ends can be joined. The XRCC5-XRRC6 dimer together with APEX1 acts as a negative regulator of transcription. In association with NAA15, the XRCC5-XRRC6 dimer binds to the osteocalcin promoter and activates osteocalcin expression. As part of the DNA-PK complex, involved in the early steps of ribosome assembly by promoting the processing of precursor rRNA into mature 18S rRNA in the small-subunit processome. Binding to U3 small nucleolar RNA, recruits PRKDC and XRCC5/Ku86 to the small-subunit processome. Plays a role in the regulation of DNA virus-mediated innate immune response by assembling into the HDP-RNP complex, a complex that serves as a platform for IRF3 phosphorylation and subsequent innate immune response activation through the cGAS-STING pathway. This chain is X-ray repair cross-complementing protein 5 (Xrcc5), found in Mus musculus (Mouse).